The chain runs to 198 residues: Putative 3-methyladenine DNA glycosylase (198 aa).

This sequence belongs to the DNA glycosylase MPG family.

This is Putative 3-methyladenine DNA glycosylase from Natranaerobius thermophilus (strain ATCC BAA-1301 / DSM 18059 / JW/NM-WN-LF).